A 234-amino-acid polypeptide reads, in one-letter code: Nitroreductase NfnB (234 aa).

25-29 (RRAVR) lines the FMN pocket. Residues serine 55, arginine 105, tyrosine 113, and isoleucine 118 each contribute to the NADP(+) site. Residues tyrosine 137, 181 to 182 (AL), and arginine 223 each bind FMN.

It belongs to the nitroreductase family. As to quaternary structure, homodimer. It depends on FMN as a cofactor.

In terms of biological role, confers resistance to antitubercular drugs benzothiazinone (BTZ) and dinitrobenzamide (DNB). Inactivates BTZ and DNB by reducing an essential nitro group of these compounds to amino group or to hydroxyl amine, respectively, using NADH or NADPH as source of reducing equivalents; two electrons are transferred. Able to reduce the nitro group of bicyclic nitroimidazole PA-824, but not of quinone menadione, nitrofurazone, methyl-4-nitrobenzoate, 4-nitrobenzene methyl sulfonate or 4-nitroacetophenone. The polypeptide is Nitroreductase NfnB (Mycolicibacterium smegmatis (strain ATCC 700084 / mc(2)155) (Mycobacterium smegmatis)).